Consider the following 316-residue polypeptide: MFGRVFNRSSPIIRLSVRTITSLNGARASVNRPLAKTLISNGNHIFNKKLYLLGLFGITSGYYFTISNGGSAIINDENVNDDASKTVSVDSSISPLPVNYSKNEYSLSNDYSLLGYGIRAVTFLKFKIYALGIYVADEDIKSIAKLFSTSYLSSTFIDTDKSKSHPENVKEALNDPKKSLILIGNLLDSGIKMMAKITPVRNTDFNHLRDGITKTVLNHPNANEKKTELENGLAQLKETLSNKGSVAKNDDLFIELKSNGSLVFTHNNRKKNKAIHLGTVTDPIVGKFLFSQYIGGPKPLSPPTKETVTDKIYSIV.

The N-terminal 41 residues, 1-41 (MFGRVFNRSSPIIRLSVRTITSLNGARASVNRPLAKTLISN), are a transit peptide targeting the mitochondrion.

Belongs to the AIM18/AIM46 family.

The protein resides in the mitochondrion. This chain is Altered inheritance of mitochondria protein 18, mitochondrial (AIM18), found in Vanderwaltozyma polyspora (strain ATCC 22028 / DSM 70294 / BCRC 21397 / CBS 2163 / NBRC 10782 / NRRL Y-8283 / UCD 57-17) (Kluyveromyces polysporus).